A 66-amino-acid chain; its full sequence is MKAKFKILIPEPKSKFIRVKCRQCNNEQVIFSNATFPVRCLSCGAQIVIPKGGKAKIEGDTVRILG.

4 residues coordinate Zn(2+): cysteine 21, cysteine 24, cysteine 40, and cysteine 43. A C4-type zinc finger spans residues 21–43; sequence CRQCNNEQVIFSNATFPVRCLSC.

This sequence belongs to the eukaryotic ribosomal protein eS27 family. Part of the 30S ribosomal subunit. Zn(2+) is required as a cofactor.

The chain is Small ribosomal subunit protein eS27 from Sulfolobus acidocaldarius (strain ATCC 33909 / DSM 639 / JCM 8929 / NBRC 15157 / NCIMB 11770).